The chain runs to 396 residues: Phosphoglycerate kinase (396 aa).

Residues 21 to 23 (DFN), R37, 60 to 63 (HLGR), R121, and R154 each bind substrate. ATP-binding positions include K205, G296, E327, and 353 to 356 (GGDS).

It belongs to the phosphoglycerate kinase family. In terms of assembly, monomer.

Its subcellular location is the cytoplasm. It catalyses the reaction (2R)-3-phosphoglycerate + ATP = (2R)-3-phospho-glyceroyl phosphate + ADP. It functions in the pathway carbohydrate degradation; glycolysis; pyruvate from D-glyceraldehyde 3-phosphate: step 2/5. The polypeptide is Phosphoglycerate kinase (Anaeromyxobacter sp. (strain K)).